A 574-amino-acid chain; its full sequence is Myo-inositol transporter FST1 (574 aa).

Residues 1-76 (MGKSRQNSTT…VQFANPKHFT (76 aa)) are Cytoplasmic-facing. The chain crosses the membrane as a helical span at residues 77–97 (WLLVAFASMGGLLSGLDQSLI). At 98–115 (SGANLFLPDDLGLTEHEN) the chain is on the extracellular side. Residues 116 to 136 (SLVNSGMPLGAVGGALLLSPA) traverse the membrane as a helical segment. At 137 to 143 (NEYFGRK) the chain is on the cytoplasmic side. Residues 144 to 164 (GAIIISIILYTIGAALEAGSI) traverse the membrane as a helical segment. At 165–173 (NFGMIVSSR) the chain is on the extracellular side. The helical transmembrane segment at 174 to 194 (VILGLGVGLEGGTVPVYVAET) threads the bilayer. Residues 195 to 205 (VERRIRGNLVS) lie on the Cytoplasmic side of the membrane. Residues 206-226 (LYQFNIALGEVLGYAVGAIFL) traverse the membrane as a helical segment. At 227 to 233 (NVPGNWR) the chain is on the extracellular side. A helical transmembrane segment spans residues 234 to 254 (YILGSSLLFSTIMFFGMLFLP). The Cytoplasmic portion of the chain corresponds to 255 to 330 (ESPRFLIHQK…RARRALVYAN (76 aa)). A helical membrane pass occupies residues 331 to 351 (IMILLGQLTGVNAIMYYMSVL). The Extracellular segment spans residues 352-363 (MNQIGFDKKESN). The helical transmembrane segment at 364-384 (YMSLVGGGSLLLGTIPAIFLM) threads the bilayer. Topologically, residues 385–390 (ERFGRR) are cytoplasmic. A helical transmembrane segment spans residues 391–411 (FWAITMLPGFFIGLVLIGVSY). Residues 412-426 (QFDVETQLQTVEGLY) lie on the Extracellular side of the membrane. The helical transmembrane segment at 427-447 (LSGLIIYMGFFGSYACLTWVV) threads the bilayer. Topologically, residues 448-465 (PSEVYPTYLRSYGMTTSD) are cytoplasmic. The chain crosses the membrane as a helical span at residues 466–486 (ALLFLASFIVTYNFTAMQNAM). Topologically, residues 487 to 490 (GKTG) are extracellular. Residues 491–511 (LALGFYGGIAFIGEIYQIFFM) traverse the membrane as a helical segment. The Cytoplasmic portion of the chain corresponds to 512 to 574 (PETKNKTLEE…PKDQVQVSHA (63 aa)).

This sequence belongs to the major facilitator superfamily. Sugar transporter (TC 2.A.1.1) family.

It localises to the cell membrane. The catalysed reaction is myo-inositol(out) + H(+)(out) = myo-inositol(in) + H(+)(in). Transporter for myo-inositol. Also appears to transport the polyketide mycotoxin fumonisin B1 (FB1). Does not appear to transport hexose sugars. The chain is Myo-inositol transporter FST1 from Gibberella moniliformis (strain M3125 / FGSC 7600) (Maize ear and stalk rot fungus).